The primary structure comprises 250 residues: 4-hydroxy-tetrahydrodipicolinate reductase (250 aa).

Residues 10-15, 78-80, and 105-108 contribute to the NAD(+) site; these read GVKGRI, GTT, and APNF. The active-site Proton donor/acceptor is the His135. (S)-2,3,4,5-tetrahydrodipicolinate is bound at residue His136. The active-site Proton donor is the Lys139. Position 145 to 146 (145 to 146) interacts with (S)-2,3,4,5-tetrahydrodipicolinate; it reads GT.

Belongs to the DapB family.

The protein resides in the cytoplasm. It carries out the reaction (S)-2,3,4,5-tetrahydrodipicolinate + NAD(+) + H2O = (2S,4S)-4-hydroxy-2,3,4,5-tetrahydrodipicolinate + NADH + H(+). It catalyses the reaction (S)-2,3,4,5-tetrahydrodipicolinate + NADP(+) + H2O = (2S,4S)-4-hydroxy-2,3,4,5-tetrahydrodipicolinate + NADPH + H(+). It functions in the pathway amino-acid biosynthesis; L-lysine biosynthesis via DAP pathway; (S)-tetrahydrodipicolinate from L-aspartate: step 4/4. Functionally, catalyzes the conversion of 4-hydroxy-tetrahydrodipicolinate (HTPA) to tetrahydrodipicolinate. In Streptomyces avermitilis (strain ATCC 31267 / DSM 46492 / JCM 5070 / NBRC 14893 / NCIMB 12804 / NRRL 8165 / MA-4680), this protein is 4-hydroxy-tetrahydrodipicolinate reductase.